The primary structure comprises 435 residues: Uracil permease (435 aa).

The next 12 helical transmembrane spans lie at 17 to 37 (FSWV…TILV), 42 to 62 (GMSP…YLLI), 67 to 87 (IPAY…VKAT), 91 to 111 (GAAM…ALLI), 122 to 142 (ILPP…LAST), 161 to 181 (LKHF…AIFL), 191 to 213 (LIGI…QPVL), 234 to 254 (VTLG…SEHI), 311 to 331 (VFSV…GFIG), 336 to 356 (LISS…FGII), 376 to 396 (NLII…IQVS), and 399 to 419 (GFQV…NLIL).

Belongs to the nucleobase:cation symporter-2 (NCS2) (TC 2.A.40) family.

The protein localises to the cell membrane. Transport of uracil in the cell. This chain is Uracil permease (pyrP), found in Bacillus subtilis (strain 168).